Here is a 608-residue protein sequence, read N- to C-terminus: Chaperone protein DnaK (608 aa).

Phosphothreonine; by autocatalysis is present on Thr-174. Positions 493 to 505 (YEEEDRKRKESAE) are enriched in basic and acidic residues. Disordered stretches follow at residues 493–514 (YEEEDRKRKESAETRNNADSMV) and 577–608 (GQAAGANPGAQTTGGEQGNVYDAEYKVVDDDK). The span at 577 to 590 (GQAAGANPGAQTTG) shows a compositional bias: low complexity. Residues 599–608 (AEYKVVDDDK) show a composition bias toward basic and acidic residues.

This sequence belongs to the heat shock protein 70 family.

Functionally, acts as a chaperone. In Acetivibrio thermocellus (strain ATCC 27405 / DSM 1237 / JCM 9322 / NBRC 103400 / NCIMB 10682 / NRRL B-4536 / VPI 7372) (Clostridium thermocellum), this protein is Chaperone protein DnaK.